A 334-amino-acid polypeptide reads, in one-letter code: Holliday junction branch migration complex subunit RuvB (334 aa).

Positions 4 to 186 (ADRLIAPENP…FGITQRLEYY (183 aa)) are large ATPase domain (RuvB-L). Residues Ile-25, Arg-26, Gly-67, Lys-70, Thr-71, Thr-72, 133 to 135 (EDY), Arg-176, Tyr-186, and Arg-223 contribute to the ATP site. Thr-71 contacts Mg(2+). The segment at 187 to 257 (KIPDLQNIVQ…TADKALNMLD (71 aa)) is small ATPAse domain (RuvB-S). Residues 260–334 (SKGFDYMDRK…RAYLHFGIEK (75 aa)) form a head domain (RuvB-H) region. Arg-315 and Arg-320 together coordinate DNA.

Belongs to the RuvB family. Homohexamer. Forms an RuvA(8)-RuvB(12)-Holliday junction (HJ) complex. HJ DNA is sandwiched between 2 RuvA tetramers; dsDNA enters through RuvA and exits via RuvB. An RuvB hexamer assembles on each DNA strand where it exits the tetramer. Each RuvB hexamer is contacted by two RuvA subunits (via domain III) on 2 adjacent RuvB subunits; this complex drives branch migration. In the full resolvosome a probable DNA-RuvA(4)-RuvB(12)-RuvC(2) complex forms which resolves the HJ.

The protein resides in the cytoplasm. The catalysed reaction is ATP + H2O = ADP + phosphate + H(+). Its function is as follows. The RuvA-RuvB-RuvC complex processes Holliday junction (HJ) DNA during genetic recombination and DNA repair, while the RuvA-RuvB complex plays an important role in the rescue of blocked DNA replication forks via replication fork reversal (RFR). RuvA specifically binds to HJ cruciform DNA, conferring on it an open structure. The RuvB hexamer acts as an ATP-dependent pump, pulling dsDNA into and through the RuvAB complex. RuvB forms 2 homohexamers on either side of HJ DNA bound by 1 or 2 RuvA tetramers; 4 subunits per hexamer contact DNA at a time. Coordinated motions by a converter formed by DNA-disengaged RuvB subunits stimulates ATP hydrolysis and nucleotide exchange. Immobilization of the converter enables RuvB to convert the ATP-contained energy into a lever motion, pulling 2 nucleotides of DNA out of the RuvA tetramer per ATP hydrolyzed, thus driving DNA branch migration. The RuvB motors rotate together with the DNA substrate, which together with the progressing nucleotide cycle form the mechanistic basis for DNA recombination by continuous HJ branch migration. Branch migration allows RuvC to scan DNA until it finds its consensus sequence, where it cleaves and resolves cruciform DNA. The polypeptide is Holliday junction branch migration complex subunit RuvB (Vibrio vulnificus (strain YJ016)).